The following is a 352-amino-acid chain: Heat-inducible transcription repressor HrcA (352 aa).

It belongs to the HrcA family.

Functionally, negative regulator of class I heat shock genes (grpE-dnaK-dnaJ and groELS operons). Prevents heat-shock induction of these operons. The polypeptide is Heat-inducible transcription repressor HrcA (Latilactobacillus sakei subsp. sakei (strain 23K) (Lactobacillus sakei subsp. sakei)).